A 429-amino-acid polypeptide reads, in one-letter code: Histidinol dehydrogenase (429 aa).

NAD(+) contacts are provided by tyrosine 130, glutamine 191, and asparagine 214. Substrate contacts are provided by serine 237, glutamine 259, and histidine 262. 2 residues coordinate Zn(2+): glutamine 259 and histidine 262. Active-site proton acceptor residues include glutamate 327 and histidine 328. Residues histidine 328, aspartate 361, glutamate 415, and histidine 420 each contribute to the substrate site. Aspartate 361 lines the Zn(2+) pocket. Histidine 420 provides a ligand contact to Zn(2+).

This sequence belongs to the histidinol dehydrogenase family. Requires Zn(2+) as cofactor.

It catalyses the reaction L-histidinol + 2 NAD(+) + H2O = L-histidine + 2 NADH + 3 H(+). The protein operates within amino-acid biosynthesis; L-histidine biosynthesis; L-histidine from 5-phospho-alpha-D-ribose 1-diphosphate: step 9/9. In terms of biological role, catalyzes the sequential NAD-dependent oxidations of L-histidinol to L-histidinaldehyde and then to L-histidine. The protein is Histidinol dehydrogenase of Nitrobacter winogradskyi (strain ATCC 25391 / DSM 10237 / CIP 104748 / NCIMB 11846 / Nb-255).